Consider the following 300-residue polypeptide: Recombination-associated protein RdgC (300 aa).

It belongs to the RdgC family.

The protein localises to the cytoplasm. It is found in the nucleoid. May be involved in recombination. The protein is Recombination-associated protein RdgC of Janthinobacterium sp. (strain Marseille) (Minibacterium massiliensis).